The following is a 651-amino-acid chain: Probable potassium transport system protein Kup (651 aa).

Transmembrane regions (helical) follow at residues 41–61 (LVLG…IYAF), 82–102 (VVSL…VLFV), 130–150 (LILG…VITP), 163–183 (IVAP…LVTL), 194–214 (VAIV…ASGL), 235–255 (FLTV…LAMT), 276–296 (WLWI…AFIL), 309–329 (MIPS…TVIA), 366–386 (IYIP…VLGF), 395–415 (AYGI…YIVM), 426–446 (ALPI…ANII), and 450–470 (EGGW…WTWV).

The protein belongs to the HAK/KUP transporter (TC 2.A.72) family.

It is found in the cell inner membrane. The enzyme catalyses K(+)(in) + H(+)(in) = K(+)(out) + H(+)(out). Functionally, transport of potassium into the cell. Likely operates as a K(+):H(+) symporter. This chain is Probable potassium transport system protein Kup, found in Brucella melitensis biotype 1 (strain ATCC 23456 / CCUG 17765 / NCTC 10094 / 16M).